The following is a 173-amino-acid chain: Bursicon (173 aa).

An N-terminal signal peptide occupies residues M1–A32. Disulfide bonds link C52-C101, C66-C115, C76-C136, C80-C138, and C98-C141. Positions C52–T142 constitute a CTCK domain.

As to quaternary structure, heterodimer of Burs and Pburs. As to expression, expressed in one to two pairs of neurons in each of the thoracic and abdominal neuromeres of the larval CNS. Coexpressed with CCAP in most CCAP-specific neurons. Coexpressed with Pburs in four bilateral neurons in thoracic and abdominal neuromeres of the ventral nervous system.

The protein resides in the secreted. Functionally, final heterodimeric neurohormone released at the end of the molting cycle, involved in the sclerotization (tanning) of the insect cuticle, melanization and wing spreading. Heterodimer specifically activates the G protein-coupled receptor rk. In Drosophila melanogaster (Fruit fly), this protein is Bursicon.